Consider the following 436-residue polypeptide: Gamma-glutamyl phosphate reductase (436 aa).

The protein belongs to the gamma-glutamyl phosphate reductase family.

It is found in the cytoplasm. The catalysed reaction is L-glutamate 5-semialdehyde + phosphate + NADP(+) = L-glutamyl 5-phosphate + NADPH + H(+). The protein operates within amino-acid biosynthesis; L-proline biosynthesis; L-glutamate 5-semialdehyde from L-glutamate: step 2/2. Its function is as follows. Catalyzes the NADPH-dependent reduction of L-glutamate 5-phosphate into L-glutamate 5-semialdehyde and phosphate. The product spontaneously undergoes cyclization to form 1-pyrroline-5-carboxylate. The protein is Gamma-glutamyl phosphate reductase of Prochlorococcus marinus subsp. pastoris (strain CCMP1986 / NIES-2087 / MED4).